The following is a 164-amino-acid chain: Putative 4-hydroxy-4-methyl-2-oxoglutarate aldolase (164 aa).

Substrate contacts are provided by residues 80-83 (GGNL) and Arg102. Residue Asp103 participates in a divalent metal cation binding.

Belongs to the class II aldolase/RraA-like family. Homotrimer. The cofactor is a divalent metal cation.

It catalyses the reaction 4-hydroxy-4-methyl-2-oxoglutarate = 2 pyruvate. The catalysed reaction is oxaloacetate + H(+) = pyruvate + CO2. Functionally, catalyzes the aldol cleavage of 4-hydroxy-4-methyl-2-oxoglutarate (HMG) into 2 molecules of pyruvate. Also contains a secondary oxaloacetate (OAA) decarboxylase activity due to the common pyruvate enolate transition state formed following C-C bond cleavage in the retro-aldol and decarboxylation reactions. The polypeptide is Putative 4-hydroxy-4-methyl-2-oxoglutarate aldolase (Paraburkholderia phytofirmans (strain DSM 17436 / LMG 22146 / PsJN) (Burkholderia phytofirmans)).